A 913-amino-acid polypeptide reads, in one-letter code: Eukaryotic translation initiation factor 3 subunit C (913 aa).

The tract at residues methionine 1–aspartate 44 is disordered. Residues glycine 8–glutamate 21 show a composition bias toward low complexity. Serine 9, serine 11, serine 13, serine 15, serine 16, serine 18, and serine 39 each carry phosphoserine. Lysine 99 is subject to N6-acetyllysine. 2 disordered regions span residues threonine 157–tryptophan 301 and glutamine 522–glutamate 542. Serine 166, serine 178, serine 181, and serine 182 each carry phosphoserine. The segment covering serine 166–glycine 190 has biased composition (acidic residues). Positions lysine 199–aspartate 216 are enriched in basic and acidic residues. Acidic residues predominate over residues aspartate 217–aspartate 232. The segment covering proline 261–alanine 278 has biased composition (basic and acidic residues). Residues glutamine 522–lysine 531 are compositionally biased toward polar residues. Phosphothreonine is present on threonine 524. Position 643 is an N6-acetyllysine (lysine 643). Residues phenylalanine 673–proline 849 form the PCI domain. Residues phenylalanine 885–tyrosine 913 form a disordered region. Over residues arginine 886–methionine 899 the composition is skewed to basic and acidic residues. At serine 909 the chain carries Phosphoserine.

As to quaternary structure, component of the eukaryotic translation initiation factor 3 (eIF-3) complex, which is composed of 13 subunits: EIF3A, EIF3B, EIF3C, EIF3D, EIF3E, EIF3F, EIF3G, EIF3H, EIF3I, EIF3J, EIF3K, EIF3L and EIF3M. The eIF-3 complex appears to include 3 stable modules: module A is composed of EIF3A, EIF3B, EIF3G and EIF3I; module B is composed of EIF3F, EIF3H, and EIF3M; and module C is composed of EIF3C, EIF3D, EIF3E, EIF3K and EIF3L. EIF3C of module C binds EIF3B of module A and EIF3H of module B, thereby linking the three modules. EIF3J is a labile subunit that binds to the eIF-3 complex via EIF3B. The eIF-3 complex interacts with RPS6KB1 under conditions of nutrient depletion. Mitogenic stimulation leads to binding and activation of a complex composed of MTOR and RPTOR, leading to phosphorylation and release of RPS6KB1 and binding of EIF4B to eIF-3. Identified in a HCV IRES-mediated translation complex, at least composed of EIF3C, IGF2BP1, RPS3 and HCV RNA-replicon. Interacts with ALKBH4, IFIT1 and IFIT2. Interacts with BZW2/5MP1. Phosphorylated. Phosphorylation is enhanced upon serum stimulation.

It is found in the cytoplasm. Functionally, component of the eukaryotic translation initiation factor 3 (eIF-3) complex, which is required for several steps in the initiation of protein synthesis. The eIF-3 complex associates with the 40S ribosome and facilitates the recruitment of eIF-1, eIF-1A, eIF-2:GTP:methionyl-tRNAi and eIF-5 to form the 43S pre-initiation complex (43S PIC). The eIF-3 complex stimulates mRNA recruitment to the 43S PIC and scanning of the mRNA for AUG recognition. The eIF-3 complex is also required for disassembly and recycling of post-termination ribosomal complexes and subsequently prevents premature joining of the 40S and 60S ribosomal subunits prior to initiation. The eIF-3 complex specifically targets and initiates translation of a subset of mRNAs involved in cell proliferation, including cell cycling, differentiation and apoptosis, and uses different modes of RNA stem-loop binding to exert either translational activation or repression. In Homo sapiens (Human), this protein is Eukaryotic translation initiation factor 3 subunit C.